We begin with the raw amino-acid sequence, 363 residues long: MKASIVAKLEVLVERYEEVQALLGDPGTISDQNKYRELTKEYAQLEVVVLSFKKYQSAQNDLAVAEMMSDDDDPDMREMAKEEIKEAKKTVEKLAADLQILLLPKDPNDDRNCYLEIRAGAGGDEAAIFAGNLFRMYSKYAESKGWRVEVMNSNASEQGGYKELIAKIDGEGAYGIMKFESGGHRVQRVPETESQGRIHTSACTVVVMPEVPEAEAISINPADLKVDTFRASGAGGQHVNKTDSAVRLTHLPTGTVVECQDQRSQHKNRAQAMSVLQSRLQQAEDEKSHAEEQTIRRSLVASGDRSERIRTYNYPQGRVSDHRINLTVYRLNEVLEGDLNALHEPILLEDQADKLAALSQAEF.

Position 237 is an N5-methylglutamine (Gln-237). The tract at residues 281–302 is disordered; sequence QQAEDEKSHAEEQTIRRSLVAS. A compositionally biased stretch (basic and acidic residues) spans 282–295; it reads QAEDEKSHAEEQTI.

This sequence belongs to the prokaryotic/mitochondrial release factor family. In terms of processing, methylated by PrmC. Methylation increases the termination efficiency of RF1.

It is found in the cytoplasm. In terms of biological role, peptide chain release factor 1 directs the termination of translation in response to the peptide chain termination codons UAG and UAA. This is Peptide chain release factor 1 from Psychromonas ingrahamii (strain DSM 17664 / CCUG 51855 / 37).